The sequence spans 807 residues: Dual specificity protein phosphatase PPS1 (807 aa).

In terms of domain architecture, Tyrosine-protein phosphatase spans 585 to 783 (LPSRILRHLY…LFKWWKKHYN (199 aa)). The catalytic stretch occupies residues 593 to 807 (LYLGSLDHAQ…GIAEVNMKYT (215 aa)). Cysteine 725 functions as the Phosphocysteine intermediate in the catalytic mechanism.

This sequence belongs to the protein-tyrosine phosphatase family. Non-receptor class dual specificity subfamily.

The catalysed reaction is O-phospho-L-tyrosyl-[protein] + H2O = L-tyrosyl-[protein] + phosphate. It catalyses the reaction O-phospho-L-seryl-[protein] + H2O = L-seryl-[protein] + phosphate. It carries out the reaction O-phospho-L-threonyl-[protein] + H2O = L-threonyl-[protein] + phosphate. Its function is as follows. Protein phosphatase with specificity for serine, threonine, and tyrosine residues; has a role in the DNA synthesis phase of the cell cycle. This is Dual specificity protein phosphatase PPS1 (PPS1) from Saccharomyces cerevisiae (strain ATCC 204508 / S288c) (Baker's yeast).